Consider the following 303-residue polypeptide: UDP-3-O-acyl-N-acetylglucosamine deacetylase (303 aa).

Zn(2+)-binding residues include H78, H237, and D241. H264 serves as the catalytic Proton donor.

The protein belongs to the LpxC family. The cofactor is Zn(2+).

The enzyme catalyses a UDP-3-O-[(3R)-3-hydroxyacyl]-N-acetyl-alpha-D-glucosamine + H2O = a UDP-3-O-[(3R)-3-hydroxyacyl]-alpha-D-glucosamine + acetate. It functions in the pathway glycolipid biosynthesis; lipid IV(A) biosynthesis; lipid IV(A) from (3R)-3-hydroxytetradecanoyl-[acyl-carrier-protein] and UDP-N-acetyl-alpha-D-glucosamine: step 2/6. Functionally, catalyzes the hydrolysis of UDP-3-O-myristoyl-N-acetylglucosamine to form UDP-3-O-myristoylglucosamine and acetate, the committed step in lipid A biosynthesis. The chain is UDP-3-O-acyl-N-acetylglucosamine deacetylase from Pseudomonas fluorescens (strain ATCC BAA-477 / NRRL B-23932 / Pf-5).